The primary structure comprises 636 residues: Endoglucanase 4 (636 aa).

A signal peptide spans 1 to 25 (MTRRWSFLVQCFTFKKKEGVRSRYM). Asp82 functions as the Nucleophile in the catalytic mechanism. Residues His400, Asp438, and Glu447 contribute to the active site. The region spanning 478 to 635 (KVEDEFFVEA…GDLVFGTLPN (158 aa)) is the CBM3 domain.

This sequence belongs to the glycosyl hydrolase 9 (cellulase E) family.

It localises to the secreted. The enzyme catalyses Endohydrolysis of (1-&gt;4)-beta-D-glucosidic linkages in cellulose, lichenin and cereal beta-D-glucans.. The polypeptide is Endoglucanase 4 (Bacillus sp. (strain KSM-522)).